We begin with the raw amino-acid sequence, 339 residues long: N-acetyl-gamma-glutamyl-phosphate reductase 1 (339 aa).

Cys149 is a catalytic residue.

It belongs to the NAGSA dehydrogenase family. Type 1 subfamily.

Its subcellular location is the cytoplasm. It carries out the reaction N-acetyl-L-glutamate 5-semialdehyde + phosphate + NADP(+) = N-acetyl-L-glutamyl 5-phosphate + NADPH + H(+). It functions in the pathway amino-acid biosynthesis; L-arginine biosynthesis; N(2)-acetyl-L-ornithine from L-glutamate: step 3/4. In terms of biological role, catalyzes the NADPH-dependent reduction of N-acetyl-5-glutamyl phosphate to yield N-acetyl-L-glutamate 5-semialdehyde. This is N-acetyl-gamma-glutamyl-phosphate reductase 1 from Lactiplantibacillus plantarum (strain ATCC BAA-793 / NCIMB 8826 / WCFS1) (Lactobacillus plantarum).